Here is a 291-residue protein sequence, read N- to C-terminus: N-acetylmannosamine kinase (291 aa).

ATP is bound by residues 5–12 (AIDIGGTK) and 132–139 (GVGGGVVC). Zn(2+)-binding residues include histidine 156, cysteine 166, cysteine 168, and cysteine 173.

It belongs to the ROK (NagC/XylR) family. NanK subfamily. In terms of assembly, homodimer.

The enzyme catalyses an N-acyl-D-mannosamine + ATP = an N-acyl-D-mannosamine 6-phosphate + ADP + H(+). The protein operates within amino-sugar metabolism; N-acetylneuraminate degradation; D-fructose 6-phosphate from N-acetylneuraminate: step 2/5. Functionally, catalyzes the phosphorylation of N-acetylmannosamine (ManNAc) to ManNAc-6-P. This chain is N-acetylmannosamine kinase, found in Salmonella paratyphi B (strain ATCC BAA-1250 / SPB7).